The chain runs to 517 residues: GMP synthase [glutamine-hydrolyzing] (517 aa).

The 192-residue stretch at Lys11–Asn202 folds into the Glutamine amidotransferase type-1 domain. Cys88 serves as the catalytic Nucleophile. Residues His176 and Glu178 contribute to the active site. One can recognise a GMPS ATP-PPase domain in the interval Trp203–Arg392. Ser230–Ser236 is a binding site for ATP.

Homodimer.

It catalyses the reaction XMP + L-glutamine + ATP + H2O = GMP + L-glutamate + AMP + diphosphate + 2 H(+). It participates in purine metabolism; GMP biosynthesis; GMP from XMP (L-Gln route): step 1/1. In terms of biological role, catalyzes the synthesis of GMP from XMP. This is GMP synthase [glutamine-hydrolyzing] from Pediococcus pentosaceus (strain ATCC 25745 / CCUG 21536 / LMG 10740 / 183-1w).